The chain runs to 1076 residues: DNA-directed RNA polymerase subunit beta (1076 aa).

This sequence belongs to the RNA polymerase beta chain family. As to quaternary structure, in plastids the minimal PEP RNA polymerase catalytic core is composed of four subunits: alpha, beta, beta', and beta''. When a (nuclear-encoded) sigma factor is associated with the core the holoenzyme is formed, which can initiate transcription.

The protein localises to the plastid. The protein resides in the chloroplast. The enzyme catalyses RNA(n) + a ribonucleoside 5'-triphosphate = RNA(n+1) + diphosphate. Functionally, DNA-dependent RNA polymerase catalyzes the transcription of DNA into RNA using the four ribonucleoside triphosphates as substrates. The sequence is that of DNA-directed RNA polymerase subunit beta from Lolium perenne (Perennial ryegrass).